Here is a 395-residue protein sequence, read N- to C-terminus: Tyrosine--tRNA ligase (395 aa).

The 'HIGH' region motif lies at 42 to 51 (PTAPDIHLGH). A 'KMSKS' region motif is present at residues 226–230 (KMSKS). Lys-229 lines the ATP pocket. Residues 334 to 394 (IGLANLLKEA…GKRKFARVTV (61 aa)) form the S4 RNA-binding domain.

Belongs to the class-I aminoacyl-tRNA synthetase family. TyrS type 2 subfamily. Homodimer.

The protein resides in the cytoplasm. It catalyses the reaction tRNA(Tyr) + L-tyrosine + ATP = L-tyrosyl-tRNA(Tyr) + AMP + diphosphate + H(+). Its function is as follows. Catalyzes the attachment of tyrosine to tRNA(Tyr) in a two-step reaction: tyrosine is first activated by ATP to form Tyr-AMP and then transferred to the acceptor end of tRNA(Tyr). This Mannheimia succiniciproducens (strain KCTC 0769BP / MBEL55E) protein is Tyrosine--tRNA ligase.